Reading from the N-terminus, the 422-residue chain is IMP-specific 5'-nucleotidase 1 (422 aa).

2 residues coordinate ATP: R106 and H124. D146 acts as the Nucleophile in catalysis. IMP is bound by residues D146, D148, D154, T182, D348, and K356. 2 residues coordinate Mg(2+): D146 and D148. The active-site Proton donor is D148. A Mg(2+)-binding site is contributed by D383.

The protein belongs to the ISN1 family. As to quaternary structure, homotetramer. The cofactor is Mg(2+).

The enzyme catalyses IMP + H2O = inosine + phosphate. Its activity is regulated as follows. Allosterically activated by ATP. ATP binding is a prerequisite to magnesium and substrate binding. ATP binds to 2 of the subunits in the homotetramer inducing a closure of these 2 subunits and the release of the C-terminal loop, thereby activating the enzyme. Its function is as follows. IMP-specific 5'-nucleotidase involved in IMP (inositol monophosphate) degradation. The protein is IMP-specific 5'-nucleotidase 1 (ISN1) of Kluyveromyces lactis (strain ATCC 8585 / CBS 2359 / DSM 70799 / NBRC 1267 / NRRL Y-1140 / WM37) (Yeast).